Reading from the N-terminus, the 343-residue chain is Succinylglutamate desuccinylase (343 aa).

Positions 60, 63, and 157 each coordinate Zn(2+). The active site involves E221.

The protein belongs to the AspA/AstE family. Succinylglutamate desuccinylase subfamily. Zn(2+) serves as cofactor.

It catalyses the reaction N-succinyl-L-glutamate + H2O = L-glutamate + succinate. Its pathway is amino-acid degradation; L-arginine degradation via AST pathway; L-glutamate and succinate from L-arginine: step 5/5. Transforms N(2)-succinylglutamate into succinate and glutamate. In Idiomarina loihiensis (strain ATCC BAA-735 / DSM 15497 / L2-TR), this protein is Succinylglutamate desuccinylase.